The chain runs to 483 residues: Regulatory protein ViaA (483 aa).

The protein belongs to the ViaA family. In terms of assembly, homodimer. Interacts with RavA.

The protein localises to the cytoplasm. Functionally, component of the RavA-ViaA chaperone complex, which may act on the membrane to optimize the function of some of the respiratory chains. ViaA stimulates the ATPase activity of RavA. In Shigella flexneri serotype 5b (strain 8401), this protein is Regulatory protein ViaA.